Consider the following 173-residue polypeptide: Nicotinamide-nucleotide adenylyltransferase (173 aa).

This sequence belongs to the archaeal NMN adenylyltransferase family.

The protein localises to the cytoplasm. It carries out the reaction beta-nicotinamide D-ribonucleotide + ATP + H(+) = diphosphate + NAD(+). It participates in cofactor biosynthesis; NAD(+) biosynthesis; NAD(+) from nicotinamide D-ribonucleotide: step 1/1. The sequence is that of Nicotinamide-nucleotide adenylyltransferase from Methanosarcina barkeri (strain Fusaro / DSM 804).